The primary structure comprises 198 residues: MTARLVLASNNAKKAVEMTTLLAPLGIEVLPQSAFDIPEADEPHPTFVENALAKARHAAALSGLPAVADDSGLCVAALGGAPGVQSARFAGEPKSDARNNALLVERLAGSADRRAFFYSVVALVRHADDPRPLIADGEWHGTILYAPRGANGFGYDPLFFLPELGQTAAELDAQLKNTLSHRGAAMRHLLARLSTAPL.

9-14 (SNNAKK) contributes to the substrate binding site. Asp41 and Asp70 together coordinate Mg(2+). Residue Asp70 is the Proton acceptor of the active site. Substrate is bound by residues Ser71, 153-156 (FGYD), Lys176, and 181-182 (HR).

Belongs to the HAM1 NTPase family. In terms of assembly, homodimer. Requires Mg(2+) as cofactor.

The catalysed reaction is XTP + H2O = XMP + diphosphate + H(+). It catalyses the reaction dITP + H2O = dIMP + diphosphate + H(+). The enzyme catalyses ITP + H2O = IMP + diphosphate + H(+). In terms of biological role, pyrophosphatase that catalyzes the hydrolysis of nucleoside triphosphates to their monophosphate derivatives, with a high preference for the non-canonical purine nucleotides XTP (xanthosine triphosphate), dITP (deoxyinosine triphosphate) and ITP. Seems to function as a house-cleaning enzyme that removes non-canonical purine nucleotides from the nucleotide pool, thus preventing their incorporation into DNA/RNA and avoiding chromosomal lesions. The sequence is that of dITP/XTP pyrophosphatase from Aromatoleum aromaticum (strain DSM 19018 / LMG 30748 / EbN1) (Azoarcus sp. (strain EbN1)).